The sequence spans 496 residues: Probable 26S proteasome non-ATPase regulatory subunit 3 (496 aa).

Positions 249–428 (ARFLYYLGRI…GYMRSKESTD (180 aa)) constitute a PCI domain. The tract at residues 458-480 (RYPPKSYGKELESAEERREREQQ) is disordered. The segment covering 464–480 (YGKELESAEERREREQQ) has biased composition (basic and acidic residues).

This sequence belongs to the proteasome subunit S3 family. As to quaternary structure, the 26S proteasome is composed of a core protease, known as the 20S proteasome, capped at one or both ends by the 19S regulatory complex (RC). The RC is composed of at least 18 different subunits in two subcomplexes, the base and the lid, which form the portions proximal and distal to the 20S proteolytic core, respectively.

In terms of biological role, acts as a regulatory subunit of the 26 proteasome which is involved in the ATP-dependent degradation of ubiquitinated proteins. This chain is Probable 26S proteasome non-ATPase regulatory subunit 3 (Dox-A2), found in Anopheles gambiae (African malaria mosquito).